The chain runs to 120 residues: MLSACNRMRRSSEFDATVKFGLRAVQSDVIIHVWRGCNRDETKAPHVGLIIAKTVGSAVERHRVARRLRHVARTMLGELGGADQVVIRALPSSRNVSSAWLAQQLRNGLRCALDLAETDW.

The protein belongs to the RnpA family. Consists of a catalytic RNA component (M1 or rnpB) and a protein subunit.

It carries out the reaction Endonucleolytic cleavage of RNA, removing 5'-extranucleotides from tRNA precursor.. In terms of biological role, RNaseP catalyzes the removal of the 5'-leader sequence from pre-tRNA to produce the mature 5'-terminus. It can also cleave other RNA substrates such as 4.5S RNA. The protein component plays an auxiliary but essential role in vivo by binding to the 5'-leader sequence and broadening the substrate specificity of the ribozyme. The protein is Ribonuclease P protein component of Mycobacterium leprae (strain Br4923).